A 357-amino-acid chain; its full sequence is Histidinol-phosphate aminotransferase 2 (357 aa).

Residue Lys-215 is modified to N6-(pyridoxal phosphate)lysine.

The protein belongs to the class-II pyridoxal-phosphate-dependent aminotransferase family. Histidinol-phosphate aminotransferase subfamily. As to quaternary structure, homodimer. Requires pyridoxal 5'-phosphate as cofactor.

The enzyme catalyses L-histidinol phosphate + 2-oxoglutarate = 3-(imidazol-4-yl)-2-oxopropyl phosphate + L-glutamate. It participates in amino-acid biosynthesis; L-histidine biosynthesis; L-histidine from 5-phospho-alpha-D-ribose 1-diphosphate: step 7/9. The polypeptide is Histidinol-phosphate aminotransferase 2 (Thiobacillus denitrificans (strain ATCC 25259 / T1)).